Consider the following 1006-residue polypeptide: UPF0182 protein Arth_2749 (1006 aa).

7 helical membrane passes run 18–38, 64–84, 115–135, 168–188, 211–231, 260–280, and 287–307; these read GALT…IFFA, IIIF…AIRI, VVMI…AASQ, FLGF…IAGI, QIHL…NFWL, SILA…AVIG, and IGTA…PWVI. Disordered stretches follow at residues 490–519, 896–923, and 975–1006; these read GAPE…FTGN, KAGD…GGTD, and LGSE…SPSN. Over residues 495–509 the composition is skewed to basic and acidic residues; it reads SPHREQDRPAGKEGD. Composition is skewed to low complexity over residues 911–923 and 979–1000; these read AGGS…GGTD and GASP…AATP.

It belongs to the UPF0182 family.

Its subcellular location is the cell membrane. In Arthrobacter sp. (strain FB24), this protein is UPF0182 protein Arth_2749.